Reading from the N-terminus, the 429-residue chain is Phosphomethylpyrimidine synthase (429 aa).

Substrate-binding positions include asparagine 66, methionine 95, tyrosine 124, histidine 163, 185–187, 226–229, and glutamate 265; these read SRG and DGLR. Histidine 269 is a binding site for Zn(2+). Residue tyrosine 292 participates in substrate binding. A Zn(2+)-binding site is contributed by histidine 333. Cysteine 407, cysteine 410, and cysteine 414 together coordinate [4Fe-4S] cluster.

Belongs to the ThiC family. The cofactor is [4Fe-4S] cluster.

It catalyses the reaction 5-amino-1-(5-phospho-beta-D-ribosyl)imidazole + S-adenosyl-L-methionine = 4-amino-2-methyl-5-(phosphooxymethyl)pyrimidine + CO + 5'-deoxyadenosine + formate + L-methionine + 3 H(+). Its pathway is cofactor biosynthesis; thiamine diphosphate biosynthesis. Catalyzes the synthesis of the hydroxymethylpyrimidine phosphate (HMP-P) moiety of thiamine from aminoimidazole ribotide (AIR) in a radical S-adenosyl-L-methionine (SAM)-dependent reaction. This chain is Phosphomethylpyrimidine synthase, found in Pyrococcus abyssi (strain GE5 / Orsay).